The following is a 49-amino-acid chain: Large ribosomal subunit protein bL33 (49 aa).

The protein belongs to the bacterial ribosomal protein bL33 family.

This is Large ribosomal subunit protein bL33 from Alkaliphilus oremlandii (strain OhILAs) (Clostridium oremlandii (strain OhILAs)).